We begin with the raw amino-acid sequence, 506 residues long: MTAPKPVVLCILDGWGLRAEREANAVALADTPTFDRLMATCPNATLVTHGPDVGLPRGQMGNSEVGHTNIGAGRVVAMDLGAIDLAIEEGSFPQNPALRDFIAKVKANGGTAHLMGVVSDGGVHGHIQHLISAVEVLAGEGIPVVIHAITDGRDVAPTSAGEFVGQLVRVLPEVARVGTVIGRYWAMDRDKRWDRVKRASDAMLHATGEHAPDAEAAVAAALARGETDEFIAPTVVGDYAGARDGDGFFCLNFRADRAREILAGLGQPGFDSYDTGTRPDWSAFLGMVDYSKEHDRFMTAAYPKPVIRNTLGEWVASHGLRQFRIAETEKYPHVTFFLNGGREAPETGEDRYMANSPKVATYDLQPEMSAPDVSDHLVEAIGAGYDLIVVNYANPDMVGHTGDLKAAMAAVEEVDRGLGRAVEAVTTAGGAMIVTADHGNCETMVDPETGGPHTAHTTNPVPVILVNGPAGARLHAGRLADLAPTLLQLMQLPQPEEMTGRSLIDA.

2 residues coordinate Mn(2+): Asp13 and Ser63. Ser63 serves as the catalytic Phosphoserine intermediate. Residues His124, 153 to 154 (RD), Arg183, Arg189, 254 to 257 (RADR), and Lys330 contribute to the substrate site. Positions 396, 400, 437, 438, and 456 each coordinate Mn(2+).

The protein belongs to the BPG-independent phosphoglycerate mutase family. As to quaternary structure, monomer. The cofactor is Mn(2+).

It carries out the reaction (2R)-2-phosphoglycerate = (2R)-3-phosphoglycerate. Its pathway is carbohydrate degradation; glycolysis; pyruvate from D-glyceraldehyde 3-phosphate: step 3/5. Its function is as follows. Catalyzes the interconversion of 2-phosphoglycerate and 3-phosphoglycerate. In Cereibacter sphaeroides (strain KD131 / KCTC 12085) (Rhodobacter sphaeroides), this protein is 2,3-bisphosphoglycerate-independent phosphoglycerate mutase.